A 160-amino-acid polypeptide reads, in one-letter code: Small ribosomal subunit protein uS7 (160 aa).

The protein belongs to the universal ribosomal protein uS7 family. Part of the 30S ribosomal subunit. Contacts proteins S9 and S11.

In terms of biological role, one of the primary rRNA binding proteins, it binds directly to 16S rRNA where it nucleates assembly of the head domain of the 30S subunit. Is located at the subunit interface close to the decoding center, probably blocks exit of the E-site tRNA. The protein is Small ribosomal subunit protein uS7 of Rickettsia typhi (strain ATCC VR-144 / Wilmington).